Reading from the N-terminus, the 575-residue chain is MLRQFFSYYKPYKTLFFLDFFSAIAGGLMELSFPLIVNYFIDTLLPGRDWGLIIATSIGLFAVYALSSALQYIVTYWGHMLGINIETDMRKSLFDHLQKLSFKFYDNNKTGTLMSKLTNDLMYIGEVAHHGPEDLFIAVMTILGAFGVMLFINWQLALLTFIIMPIVIWLALYFNKKMTKAFTTLNKDIGDFSARVENNIGGIRLVQAFGNEAFEKERFAVNNQRFRVTKLSSYKIMAKNGSISYMLTRFVTLFVLLCGTWFVIRGSLSYGEFVAFVLLTNVLFRPIDKINAIIEMYPRGIAGFKSYMELMETEPDIQDSPDSKDVSGLKGNIRYKHVSFGYDDHHNVLNDINLSIQAGETVAFVGPSGAGKSTLCSLLPRFYEASEGDITIDGISIKDMTLSSLRGQIGVVQQDVFLFSGTLRENIAYGRLGASEEDIWQAVKQAHLEELVHNMPDGLDTMIGERGVKLSGGQKQRLSIARMFLKNPSILILDEATSALDTETEAAIQKALQELSEGRTTLVIAHRLATIKDADRIVVVTNNGIEEQGRHQDLIEAGGLYSRLHQAQFGQMVHR.

A run of 6 helical transmembrane segments spans residues Phe-16 to Ile-36, Trp-50 to Leu-70, Pro-132 to Ile-152, Trp-154 to Phe-174, Ile-243 to Val-263, and Ile-264 to Phe-284. An ABC transmembrane type-1 domain is found at Phe-16–Arg-299. The 235-residue stretch at Ile-333–Ala-567 folds into the ABC transporter domain. Gly-366–Ser-373 is a binding site for ATP.

Belongs to the ABC transporter superfamily.

Its subcellular location is the cell membrane. The protein resides in the membrane raft. This is an uncharacterized protein from Bacillus subtilis (strain 168).